The sequence spans 235 residues: Aspartate/glutamate leucyltransferase (235 aa).

It belongs to the R-transferase family. Bpt subfamily.

It is found in the cytoplasm. It carries out the reaction N-terminal L-glutamyl-[protein] + L-leucyl-tRNA(Leu) = N-terminal L-leucyl-L-glutamyl-[protein] + tRNA(Leu) + H(+). The enzyme catalyses N-terminal L-aspartyl-[protein] + L-leucyl-tRNA(Leu) = N-terminal L-leucyl-L-aspartyl-[protein] + tRNA(Leu) + H(+). Its function is as follows. Functions in the N-end rule pathway of protein degradation where it conjugates Leu from its aminoacyl-tRNA to the N-termini of proteins containing an N-terminal aspartate or glutamate. The protein is Aspartate/glutamate leucyltransferase of Pseudomonas savastanoi pv. phaseolicola (strain 1448A / Race 6) (Pseudomonas syringae pv. phaseolicola (strain 1448A / Race 6)).